The primary structure comprises 407 residues: 1-deoxy-D-xylulose 5-phosphate reductoisomerase (407 aa).

NADPH contacts are provided by Thr-25, Gly-26, Ser-27, Ile-28, Asn-53, and Asn-136. Position 137 (Lys-137) interacts with 1-deoxy-D-xylulose 5-phosphate. Glu-138 contacts NADPH. Asp-162 contributes to the Mn(2+) binding site. 1-deoxy-D-xylulose 5-phosphate is bound by residues Ser-163, Glu-164, Ser-188, and His-211. Mn(2+) is bound at residue Glu-164. Residue Gly-217 coordinates NADPH. 1-deoxy-D-xylulose 5-phosphate contacts are provided by Ser-224, Asn-229, Lys-230, and Glu-233. Glu-233 lines the Mn(2+) pocket.

The protein belongs to the DXR family. Mg(2+) serves as cofactor. The cofactor is Mn(2+).

The catalysed reaction is 2-C-methyl-D-erythritol 4-phosphate + NADP(+) = 1-deoxy-D-xylulose 5-phosphate + NADPH + H(+). It functions in the pathway isoprenoid biosynthesis; isopentenyl diphosphate biosynthesis via DXP pathway; isopentenyl diphosphate from 1-deoxy-D-xylulose 5-phosphate: step 1/6. Catalyzes the NADPH-dependent rearrangement and reduction of 1-deoxy-D-xylulose-5-phosphate (DXP) to 2-C-methyl-D-erythritol 4-phosphate (MEP). The protein is 1-deoxy-D-xylulose 5-phosphate reductoisomerase of Rhodopseudomonas palustris (strain BisA53).